The following is a 196-amino-acid chain: ATP-dependent Clp protease proteolytic subunit (196 aa).

Ser-98 functions as the Nucleophile in the catalytic mechanism. His-123 is an active-site residue.

It belongs to the peptidase S14 family. In terms of assembly, fourteen ClpP subunits assemble into 2 heptameric rings which stack back to back to give a disk-like structure with a central cavity, resembling the structure of eukaryotic proteasomes.

The protein resides in the cytoplasm. The catalysed reaction is Hydrolysis of proteins to small peptides in the presence of ATP and magnesium. alpha-casein is the usual test substrate. In the absence of ATP, only oligopeptides shorter than five residues are hydrolyzed (such as succinyl-Leu-Tyr-|-NHMec, and Leu-Tyr-Leu-|-Tyr-Trp, in which cleavage of the -Tyr-|-Leu- and -Tyr-|-Trp bonds also occurs).. In terms of biological role, cleaves peptides in various proteins in a process that requires ATP hydrolysis. Has a chymotrypsin-like activity. Plays a major role in the degradation of misfolded proteins. This is ATP-dependent Clp protease proteolytic subunit from Lactiplantibacillus plantarum (strain ATCC BAA-793 / NCIMB 8826 / WCFS1) (Lactobacillus plantarum).